The following is a 240-amino-acid chain: Pyridoxine 5'-phosphate synthase (240 aa).

Residue Asn-7 participates in 3-amino-2-oxopropyl phosphate binding. 1-deoxy-D-xylulose 5-phosphate is bound at residue 9–10 (DH). Arg-18 contacts 3-amino-2-oxopropyl phosphate. The active-site Proton acceptor is His-43. Arg-45 and His-50 together coordinate 1-deoxy-D-xylulose 5-phosphate. The Proton acceptor role is filled by Glu-70. Thr-100 provides a ligand contact to 1-deoxy-D-xylulose 5-phosphate. His-191 functions as the Proton donor in the catalytic mechanism. 3-amino-2-oxopropyl phosphate contacts are provided by residues Gly-192 and 213 to 214 (GH).

The protein belongs to the PNP synthase family. As to quaternary structure, homooctamer; tetramer of dimers.

Its subcellular location is the cytoplasm. It carries out the reaction 3-amino-2-oxopropyl phosphate + 1-deoxy-D-xylulose 5-phosphate = pyridoxine 5'-phosphate + phosphate + 2 H2O + H(+). The protein operates within cofactor biosynthesis; pyridoxine 5'-phosphate biosynthesis; pyridoxine 5'-phosphate from D-erythrose 4-phosphate: step 5/5. Functionally, catalyzes the complicated ring closure reaction between the two acyclic compounds 1-deoxy-D-xylulose-5-phosphate (DXP) and 3-amino-2-oxopropyl phosphate (1-amino-acetone-3-phosphate or AAP) to form pyridoxine 5'-phosphate (PNP) and inorganic phosphate. The protein is Pyridoxine 5'-phosphate synthase of Coxiella burnetii (strain Dugway 5J108-111).